Consider the following 387-residue polypeptide: NAD(P)H oxidoreductase RTN4IP1, mitochondrial (387 aa).

The transit peptide at 1–27 (MLMCRRWLVCSLRCHYRSFSFSAARRT) directs the protein to the mitochondrion. One can recognise an Enoyl reductase (ER) domain in the interval 38 to 379 (GKNDVLRFTK…QGHARGKTVV (342 aa)). Ser200, Gly202, Val203, Ser223, Tyr241, Leu286, Gly327, Phe329, His372, Ala373, and Arg374 together coordinate NADPH.

This sequence belongs to the zinc-containing alcohol dehydrogenase family. Quinone oxidoreductase subfamily.

Its subcellular location is the mitochondrion matrix. The protein resides in the mitochondrion outer membrane. It catalyses the reaction a 3-demethylubiquinone + NADH + 2 H(+) = a 3-demethylubiquinol + NAD(+). The catalysed reaction is a 3-demethylubiquinone + NADPH + 2 H(+) = a 3-demethylubiquinol + NADP(+). The enzyme catalyses 3-demethylubiquinone-10 + NADH + 2 H(+) = 3-demethylubiquinol-10 + NAD(+). It carries out the reaction 3-demethylubiquinone-10 + NADPH + 2 H(+) = 3-demethylubiquinol-10 + NADP(+). It participates in cofactor biosynthesis; ubiquinone biosynthesis. NAD(P)H oxidoreductase involved in the ubiquinone biosynthetic pathway. Required for the O-methyltransferase activity of COQ3. Able to catalyze the oxidoreduction of 3-demethylubiquinone into 3-demethylubiquinol in vitro. However, it is unclear if 3-demethylubiquinone constitutes a substrate in vivo. May also play a role in the regulation of retinal ganglion cell (RGC) neurite outgrowth, and hence in the development of the inner retina and optic nerve. This chain is NAD(P)H oxidoreductase RTN4IP1, mitochondrial (rtn4ip1), found in Danio rerio (Zebrafish).